The chain runs to 95 residues: RING finger protein Z (95 aa).

A compositionally biased stretch (low complexity) spans 1–16; the sequence is MGNSKSKSNPSSSSES. Residues 1–23 are disordered; it reads MGNSKSKSNPSSSSESQKGAPTV. Gly-2 carries the N-myristoyl glycine; by host lipid modification. The RING-type; atypical zinc-finger motif lies at 40-76; sequence CKCCWFADKNLIKCSDHYLCLRCLNVMLKNSDLCNIC. The PTAP/PSAP motif motif lies at 90-93; that stretch reads PSAP.

This sequence belongs to the arenaviridae Z protein family. As to quaternary structure, interacts with protein NP; this interaction probably directs the encapsidated genome to budding sites. Interacts (via RING domain) with polymerase L; this interaction inhibits viral transcription and replication, Z partially blocks the product exit tunnel for the releasing nascent RNA product. Interacts with the glycoprotein complex; this interaction plays a role in virion budding. Interacts with host eIF4E; this interaction results in eIF4E reduced affinity for its substrate, the 5'-m7 G cap structure. Interacts (via late-budding domain) with host TSG101; this interaction is essential for budding and release of viral particles. Interacts with host RPLP0; this interaction may serve to load ribosome-like particles inside the virion. Interacts with host PML; this interaction induces PML bodies redistribution in the cytoplasm upon viral infection. Myristoylation is required for the role of RING finger protein Z in assembly and budding.

The protein localises to the virion. It is found in the host cytoplasm. Its subcellular location is the host perinuclear region. The protein resides in the host cell membrane. Its function is as follows. Plays a crucial role in virion assembly and budding. Expressed late in the virus life cycle, it acts as an inhibitor of viral transcription and RNA synthesis by interacting with the viral polymerase L. Presumably recruits the NP encapsidated genome to cellular membranes at budding sites via direct interaction with NP. Plays critical roles in the final steps of viral release by interacting with host TSG101, a member of the vacuolar protein-sorting pathway and using other cellular host proteins involved in vesicle formation pathway. The budding of the virus progeny occurs after association of protein Z with the viral glycoprotein complex SSP-GP1-GP2 at the cell periphery, step that requires myristoylation of protein Z. Also selectively represses protein production by associating with host eIF4E. In cell-based minigenome assay, has an inhibitory effect on the ribonucleoprotein machinery (vRNP), which is responsible for the replication and transcription of the viral genome. The protein is RING finger protein Z of Guanarito mammarenavirus (isolate Human/Venezuela/NH-95551/1990) (GTOV).